A 109-amino-acid chain; its full sequence is Insulin (109 aa).

An N-terminal signal peptide occupies residues 1–24 (MAPWMHLLTVLALLALWGPNSVQA). 3 cysteine pairs are disulfide-bonded: Cys31/Cys93, Cys43/Cys106, and Cys92/Cys97. A propeptide spans 56–84 (ELEDLQVEQAELGLEAGGLQPSALEMILQ) (c peptide).

Belongs to the insulin family. In terms of assembly, heterodimer of a B chain and an A chain linked by two disulfide bonds.

The protein localises to the secreted. In terms of biological role, insulin decreases blood glucose concentration. It increases cell permeability to monosaccharides, amino acids and fatty acids. It accelerates glycolysis, the pentose phosphate cycle, and glycogen synthesis in liver. The chain is Insulin (INS) from Octodon degus (Degu).